The primary structure comprises 129 residues: Small ribosomal subunit protein uS8 (129 aa).

The protein belongs to the universal ribosomal protein uS8 family. In terms of assembly, part of the 30S ribosomal subunit. Contacts proteins S5 and S12.

In terms of biological role, one of the primary rRNA binding proteins, it binds directly to 16S rRNA central domain where it helps coordinate assembly of the platform of the 30S subunit. The sequence is that of Small ribosomal subunit protein uS8 from Bdellovibrio bacteriovorus (strain ATCC 15356 / DSM 50701 / NCIMB 9529 / HD100).